The sequence spans 258 residues: 14-3-3 protein 6 (258 aa).

Residues 238–258 form a disordered region; that stretch reads DMQDDGTDEIKEATPKPDDNE. Positions 245-258 are enriched in basic and acidic residues; the sequence is DEIKEATPKPDDNE.

This sequence belongs to the 14-3-3 family. Homodimer.

This chain is 14-3-3 protein 6 (TFT6), found in Solanum lycopersicum (Tomato).